We begin with the raw amino-acid sequence, 445 residues long: Methylenetetrahydrofolate--tRNA-(uracil-5-)-methyltransferase TrmFO (445 aa).

10-15 (GGGLAG) lines the FAD pocket.

This sequence belongs to the MnmG family. TrmFO subfamily. It depends on FAD as a cofactor.

It is found in the cytoplasm. The enzyme catalyses uridine(54) in tRNA + (6R)-5,10-methylene-5,6,7,8-tetrahydrofolate + NADH + H(+) = 5-methyluridine(54) in tRNA + (6S)-5,6,7,8-tetrahydrofolate + NAD(+). It carries out the reaction uridine(54) in tRNA + (6R)-5,10-methylene-5,6,7,8-tetrahydrofolate + NADPH + H(+) = 5-methyluridine(54) in tRNA + (6S)-5,6,7,8-tetrahydrofolate + NADP(+). Functionally, catalyzes the folate-dependent formation of 5-methyl-uridine at position 54 (M-5-U54) in all tRNAs. This chain is Methylenetetrahydrofolate--tRNA-(uracil-5-)-methyltransferase TrmFO, found in Microcystis aeruginosa (strain NIES-843 / IAM M-2473).